The primary structure comprises 265 residues: Hydroxyethylthiazole kinase 1 (265 aa).

Methionine 39 is a substrate binding site. ATP is bound by residues lysine 115 and threonine 168. Glycine 195 contributes to the substrate binding site.

This sequence belongs to the Thz kinase family. Mg(2+) is required as a cofactor.

It carries out the reaction 5-(2-hydroxyethyl)-4-methylthiazole + ATP = 4-methyl-5-(2-phosphooxyethyl)-thiazole + ADP + H(+). The protein operates within cofactor biosynthesis; thiamine diphosphate biosynthesis; 4-methyl-5-(2-phosphoethyl)-thiazole from 5-(2-hydroxyethyl)-4-methylthiazole: step 1/1. Its function is as follows. Catalyzes the phosphorylation of the hydroxyl group of 4-methyl-5-beta-hydroxyethylthiazole (THZ). This chain is Hydroxyethylthiazole kinase 1, found in Clostridium botulinum (strain Loch Maree / Type A3).